Consider the following 101-residue polypeptide: RNA-binding protein Hfq (101 aa).

The 60-residue stretch at 9-68 folds into the Sm domain; that stretch reads DPFLNALRRERVPVSIYLVNGIKLQGQVESFDQFVILLKNTVSQMVYKHAISTVVPSRPV. The tract at residues 63–101 is disordered; it reads VPSRPVSHHSNTPSGSTNNYHGSNPSAPQQPQQDSDDAE. The segment covering 70–86 has biased composition (polar residues); the sequence is HHSNTPSGSTNNYHGSN.

Belongs to the Hfq family. In terms of assembly, homohexamer.

In terms of biological role, RNA chaperone that binds small regulatory RNA (sRNAs) and mRNAs to facilitate mRNA translational regulation in response to envelope stress, environmental stress and changes in metabolite concentrations. Also binds with high specificity to tRNAs. This is RNA-binding protein Hfq from Yersinia pseudotuberculosis serotype O:1b (strain IP 31758).